The following is a 93-amino-acid chain: Integration host factor subunit beta (93 aa).

The protein belongs to the bacterial histone-like protein family. In terms of assembly, heterodimer of an alpha and a beta chain.

This protein is one of the two subunits of integration host factor, a specific DNA-binding protein that functions in genetic recombination as well as in transcriptional and translational control. This is Integration host factor subunit beta from Vibrio parahaemolyticus serotype O3:K6 (strain RIMD 2210633).